The sequence spans 128 residues: Fluoride-specific ion channel FluC (128 aa).

A run of 4 helical transmembrane segments spans residues 5-25, 34-54, 67-87, and 99-119; these read LFISCGAILGASLRWAIGLLF, FGTLIANLFGCLIIGVLLGLF, FLITGFLGSLTTFSSFSSEVV, and FCVLMMHLFGCLAMTVLGIWI. Na(+)-binding residues include G74 and T77.

The protein belongs to the fluoride channel Fluc/FEX (TC 1.A.43) family.

Its subcellular location is the cell inner membrane. The catalysed reaction is fluoride(in) = fluoride(out). With respect to regulation, na(+) is not transported, but it plays an essential structural role and its presence is essential for fluoride channel function. Fluoride-specific ion channel. Important for reducing fluoride concentration in the cell, thus reducing its toxicity. In Haemophilus influenzae (strain PittGG), this protein is Fluoride-specific ion channel FluC.